We begin with the raw amino-acid sequence, 238 residues long: Large ribosomal subunit protein uL2 (238 aa).

Residues 201–238 are disordered; the sequence is PFGGGGRQHPGRPKTVSRNTPPGRKVGSIAARRTGVGH.

Belongs to the universal ribosomal protein uL2 family. In terms of assembly, part of the 50S ribosomal subunit. Forms a bridge to the 30S subunit in the 70S ribosome.

Functionally, one of the primary rRNA binding proteins. Required for association of the 30S and 50S subunits to form the 70S ribosome, for tRNA binding and peptide bond formation. It has been suggested to have peptidyltransferase activity; this is somewhat controversial. Makes several contacts with the 16S rRNA in the 70S ribosome. This is Large ribosomal subunit protein uL2 from Methanocella arvoryzae (strain DSM 22066 / NBRC 105507 / MRE50).